The primary structure comprises 329 residues: tRNA (cytidine(32)/guanosine(34)-2'-O)-methyltransferase (329 aa).

5 residues coordinate S-adenosyl-L-methionine: Gly-53, Trp-55, Asp-75, Asp-91, and Asp-116. Catalysis depends on Lys-156, which acts as the Proton acceptor. The required for binding to WDR6 stretch occupies residues 221–240 (DFNQLDGPTRIIVPFVTCGD). Phosphoserine is present on Ser-271.

This sequence belongs to the class I-like SAM-binding methyltransferase superfamily. RNA methyltransferase RlmE family. TRM7 subfamily. In terms of assembly, interacts with WDR6; the interaction is direct, and required for 2'-O-methylation of position 34 in substrate tRNAs. Found in fetal brain, lung, liver and kidney. Widely expressed in adult tissue; with high expression in heart and liver, lower expression in skeletal muscle, kidney, and pancreas and also lowly expressed in brain and lung. In the adult brain, expressed in amygdala, caudate nucleus, corpus callosum, hippocampus and thalamus.

It is found in the cytoplasm. The protein localises to the nucleus. The catalysed reaction is cytidine(32)/guanosine(34) in tRNA + 2 S-adenosyl-L-methionine = 2'-O-methylcytidine(32)/2'-O-methylguanosine(34) in tRNA + 2 S-adenosyl-L-homocysteine + 2 H(+). Inhibited by 2,6-diaminopurine (DAP); inhibition promotes UGA stop-codon readthrough during translation by misincorporation of tRNA(Trp) in the nascent polypeptide. Methylates the 2'-O-ribose of nucleotides at positions 32 and 34 of the tRNA anticodon loop of substrate tRNAs. Requisite for faithful cytoplasmic translation. Requires THADA for methylation of the nucleotide at position 32 of the anticodon loop of substrate tRNAs. Requires WDR6 for methylation of the nucleotide at position 34 of the anticodon loop of substrate tRNAs. Promotes translation efficiency of the UUU codon. Plays a role in neurogenesis. Required for expression of genes involved in neurogenesis, mitochondrial translation and energy generation, and lipid biosynthesis. Requisite for RNA-mediated gene silencing. May modify position 32 in tRNA(Arg(ACG)), tRNA(Arg(CCG)), tRNA(Arg(UCG)), tRNA(Cys(GCA)), tRNA(Cys(ACA)), tRNA(Gln(CUG)), tRNA(Gln(UUG)), tRNA(Gly(CCC)), tRNA(Leu(CAG))/tRNA(Leu(CAA)), tRNA(Leu(A/IAG)), tRNA(Leu(UAG)), tRNA(Phe(GAA)), tRNA(Pro(AGG))/tRNA(Pro(CGG))/tRNA(Pro(UGG)) and tRNA(Trp(CCA)), and position 34 in tRNA(Phe(GAA)), tRNA(Leu(CAA)), tRNA(Sec(UCA)), and tRNA(Trp(CCA)). The sequence is that of tRNA (cytidine(32)/guanosine(34)-2'-O)-methyltransferase from Homo sapiens (Human).